Here is a 397-residue protein sequence, read N- to C-terminus: MAKVMRAIIVGGGIGGAATALSLARQGIKVMLLEKAHEIGEIGAGIQLGPNAFSALDSLGVGEVARQRAVFTDHITMMDAVNGEEVVHIETGQAFRDHFGGPYAVIHRVDIHATVWEAALTHPAVEYRTSTQVVDIRQTADDVTVFDDKGNSWTADILIGCDGGKSVVRQSLLGDSPRVTGHVVYRAVVDAADMPDDLRINAPVLWAGPHCHLVHYPLRGGKQYNLVVTFHSRQQEEWGVRDGSKEEVLSYFKGIHPRPRQMLDKPTSWRRWSTADREPVEKWGNDRITLVGDAAHPVAQYMAQGACMALEDAVTLGKALAQCDGDAARAFALYESVRIPRTARIVWSTREMGRVYHAAGVERQVRNLLWKGKTQSEFYRGIEWLYGWKEDNCLEAR.

The protein belongs to the 3-hydroxybenzoate 6-hydroxylase family. As to quaternary structure, monomer. It depends on FAD as a cofactor.

The catalysed reaction is 3-hydroxybenzoate + NADH + O2 + H(+) = 2,5-dihydroxybenzoate + NAD(+) + H2O. Its activity is regulated as follows. Inhibited by copper, mercury and iron ions. In terms of biological role, catalyzes the NAD- or NADP-dependent conversion of 3-hydroxybenzoate to gentisate. NAD and NADP function equally well. This chain is 3-hydroxybenzoate 6-hydroxylase (mhbM), found in Klebsiella oxytoca.